We begin with the raw amino-acid sequence, 62 residues long: Photosystem II reaction center protein Z (62 aa).

2 helical membrane passes run 8–28 (AVFA…VVFA) and 41–61 (FSGT…NSLI).

This sequence belongs to the PsbZ family. PSII is composed of 1 copy each of membrane proteins PsbA, PsbB, PsbC, PsbD, PsbE, PsbF, PsbH, PsbI, PsbJ, PsbK, PsbL, PsbM, PsbT, PsbY, PsbZ, Psb30/Ycf12, at least 3 peripheral proteins of the oxygen-evolving complex and a large number of cofactors. It forms dimeric complexes.

Its subcellular location is the plastid. It is found in the chloroplast thylakoid membrane. In terms of biological role, may control the interaction of photosystem II (PSII) cores with the light-harvesting antenna, regulates electron flow through the 2 photosystem reaction centers. PSII is a light-driven water plastoquinone oxidoreductase, using light energy to abstract electrons from H(2)O, generating a proton gradient subsequently used for ATP formation. This Nicotiana sylvestris (Wood tobacco) protein is Photosystem II reaction center protein Z.